Consider the following 474-residue polypeptide: Bifunctional protein HldE (474 aa).

The interval 1 to 318 (MKLSMPRFDQ…RAIQREEGSE (318 aa)) is ribokinase. 194–197 (NLSE) serves as a coordination point for ATP. The active site involves D263. Residues 343-474 (FTNGCFDILH…AIVEKIRGQG (132 aa)) are cytidylyltransferase.

The protein in the N-terminal section; belongs to the carbohydrate kinase PfkB family. It in the C-terminal section; belongs to the cytidylyltransferase family. In terms of assembly, homodimer.

The enzyme catalyses D-glycero-beta-D-manno-heptose 7-phosphate + ATP = D-glycero-beta-D-manno-heptose 1,7-bisphosphate + ADP + H(+). The catalysed reaction is D-glycero-beta-D-manno-heptose 1-phosphate + ATP + H(+) = ADP-D-glycero-beta-D-manno-heptose + diphosphate. It participates in nucleotide-sugar biosynthesis; ADP-L-glycero-beta-D-manno-heptose biosynthesis; ADP-L-glycero-beta-D-manno-heptose from D-glycero-beta-D-manno-heptose 7-phosphate: step 1/4. The protein operates within nucleotide-sugar biosynthesis; ADP-L-glycero-beta-D-manno-heptose biosynthesis; ADP-L-glycero-beta-D-manno-heptose from D-glycero-beta-D-manno-heptose 7-phosphate: step 3/4. Catalyzes the phosphorylation of D-glycero-D-manno-heptose 7-phosphate at the C-1 position to selectively form D-glycero-beta-D-manno-heptose-1,7-bisphosphate. Functionally, catalyzes the ADP transfer from ATP to D-glycero-beta-D-manno-heptose 1-phosphate, yielding ADP-D-glycero-beta-D-manno-heptose. This chain is Bifunctional protein HldE, found in Pseudomonas syringae pv. tomato (strain ATCC BAA-871 / DC3000).